Reading from the N-terminus, the 135-residue chain is Protein PilG (135 aa).

The Response regulatory domain occupies K9–V125. D58 bears the 4-aspartylphosphate mark.

Phosphorylated.

Its function is as follows. Plays an essential role in both cAMP-dependent and independent regulation of twitching motility. Regulates the cAMP-independent coordination of type IV pilus (T4P) biogenesis and retraction that plays a role in surface and host cell adhesion, colonization, biofilm maturation, virulence, and twitching. In addition, phosphorylated PilG is necessary for cAMP production via regulation of the adenylate cyclase CyaB. Acts therefore as a response regulator of the chemosensory system/Chp system. In Pseudomonas aeruginosa (strain ATCC 15692 / DSM 22644 / CIP 104116 / JCM 14847 / LMG 12228 / 1C / PRS 101 / PAO1), this protein is Protein PilG (pilG).